The sequence spans 495 residues: Omega-crystallin (495 aa).

Belongs to the aldehyde dehydrogenase family. As to expression, lens.

In terms of biological role, omega-crystallins are structural components of squids and octopi eye lens. Contains relatively little if any DHAL activity. This Nototodarus sloanii (Wellington flying squid) protein is Omega-crystallin.